The chain runs to 210 residues: Na(+)-translocating NADH-quinone reductase subunit D (210 aa).

6 helical membrane-spanning segments follow: residues Ile-11–Ala-31, Phe-42–Ile-62, Val-70–Leu-90, Val-103–Met-123, Phe-131–Phe-151, and Asn-178–Ile-198.

Belongs to the NqrDE/RnfAE family. Composed of six subunits; NqrA, NqrB, NqrC, NqrD, NqrE and NqrF.

It is found in the cell inner membrane. It catalyses the reaction a ubiquinone + n Na(+)(in) + NADH + H(+) = a ubiquinol + n Na(+)(out) + NAD(+). Functionally, NQR complex catalyzes the reduction of ubiquinone-1 to ubiquinol by two successive reactions, coupled with the transport of Na(+) ions from the cytoplasm to the periplasm. NqrA to NqrE are probably involved in the second step, the conversion of ubisemiquinone to ubiquinol. This chain is Na(+)-translocating NADH-quinone reductase subunit D, found in Vibrio anguillarum (Listonella anguillarum).